The sequence spans 227 residues: Ribose-5-phosphate isomerase A (227 aa).

Residues 26-29, 82-85, and 95-98 contribute to the substrate site; these read TGST, DGAD, and KGGG. Glutamate 104 (proton acceptor) is an active-site residue. Lysine 122 contributes to the substrate binding site.

Belongs to the ribose 5-phosphate isomerase family. Homodimer.

It catalyses the reaction aldehydo-D-ribose 5-phosphate = D-ribulose 5-phosphate. It functions in the pathway carbohydrate degradation; pentose phosphate pathway; D-ribose 5-phosphate from D-ribulose 5-phosphate (non-oxidative stage): step 1/1. Functionally, catalyzes the reversible conversion of ribose-5-phosphate to ribulose 5-phosphate. The polypeptide is Ribose-5-phosphate isomerase A (Streptococcus pyogenes serotype M5 (strain Manfredo)).